Consider the following 308-residue polypeptide: E3 ubiquitin-protein ligase SINAT2 (308 aa).

The RING-type zinc finger occupies 60 to 96 (CPVCTNLMYPPIHQCPNGHTLCSNCKLRVQNTCPTCR). Residues 110–303 (VAESLEVPCR…QELKLRVTGR (194 aa)) are SBD. The SIAH-type zinc-finger motif lies at 113 to 173 (SLEVPCRYQN…LVVHLKDDHK (61 aa)). Cys-118, Cys-125, His-137, Cys-141, Cys-148, Cys-155, His-167, and His-172 together coordinate Zn(2+).

It belongs to the SINA (Seven in absentia) family. As to quaternary structure, interacts with RAP2-2. Interacts with SINAT6. Interacts with ATG6 and TRAF1A. Interacts with WAV3. Interacts with FREE1. Interacts with ELC/VPS23A.

The protein localises to the endosome. The protein resides in the multivesicular body. It is found in the cytoplasmic vesicle. Its subcellular location is the autophagosome. It catalyses the reaction S-ubiquitinyl-[E2 ubiquitin-conjugating enzyme]-L-cysteine + [acceptor protein]-L-lysine = [E2 ubiquitin-conjugating enzyme]-L-cysteine + N(6)-ubiquitinyl-[acceptor protein]-L-lysine.. It functions in the pathway protein modification; protein ubiquitination. E3 ubiquitin-protein ligase that mediates ubiquitination and subsequent proteasomal degradation of target proteins. E3 ubiquitin ligases accept ubiquitin from an E2 ubiquitin-conjugating enzyme in the form of a thioester and then directly transfers the ubiquitin to targeted substrates. It probably triggers the ubiquitin-mediated degradation of different substrates. Mediates the proteasomal-dependent degradation of ATG6, a component of the autophagosome complex. Requires TRAF1A/MUSE14 and TRAF1B/MUSE13 to target ATG6 for ubiquitination and subsequent regulation of autophagosome assembly. Modulates directly the ubiquitination and proteasomal-dependent degradation of FREE1, a component of the ESCRT-I complex. Modulates directly the ubiquitination and proteasomal-dependent degradation of ELC/VPS23A, a component of the ESCRT-I complex. The polypeptide is E3 ubiquitin-protein ligase SINAT2 (Arabidopsis thaliana (Mouse-ear cress)).